The primary structure comprises 654 residues: Protein THALLO (654 aa).

The span at 1–16 shows a compositional bias: basic residues; that stretch reads MGKKGGTLKRSSKSTK. 3 disordered regions span residues 1 to 23, 35 to 145, and 164 to 212; these read MGKK…DIVE, KQRD…SDDE, and SITA…KDTH. The Nuclear localization signal 1 signature appears at 2-9; it reads GKKGGTLK. 3 stretches are compositionally biased toward acidic residues: residues 44–56, 64–82, and 103–114; these read VNDD…EDDV, GVDD…EEAE, and GDDEMADDDKDK. Positions 140–160 form a coiled coil; the sequence is LSSDDEDIKAEEEEVIRLRAE. Over residues 171–181 the composition is skewed to acidic residues; that stretch reads GLDDDSEEDSD. Over residues 182–212 the composition is skewed to basic and acidic residues; it reads RELTMEEISDKGKQATKSITDKKEKGDKDTH. Positions 243–263 form a coiled coil; that stretch reads LSELNDAVEELESKINPVMNK. Disordered stretches follow at residues 362–397, 470–492, and 509–654; these read SDSV…HQND, VSTK…DDIG, and KSSE…SIRM. Residues 364-387 are compositionally biased toward basic and acidic residues; sequence SVDRITQDTAKPMKIDNAREEKKK. The segment covering 524-546 has biased composition (acidic residues); that stretch reads SDDEDDNDGDNNDMVDNDGESED. A compositionally biased stretch (basic residues) spans 552 to 561; sequence VKQKQQAKRA. Residues 588 to 599 show a composition bias toward polar residues; the sequence is SNQMVSNRGLTR. Positions 608–615 match the Nuclear localization signal 2 motif; the sequence is PRKKYRKN. The segment covering 645–654 has biased composition (polar residues); it reads NPNTSRSIRM.

Belongs to the SAS10 family. As to quaternary structure, interacts with NUCL1, NUCL2, JMJ14, NOF1 and MPP10 in the nucleus. Mainly present in tissues undergoing rapid cellular growth and differentiation. Mostly expressed in shoots and flowers, and, to a lower extent, in leaves, siliques, roots and seedlings.

It is found in the nucleus. It localises to the nucleolus. In terms of biological role, essential protein during embryogenesis. Involved both in gene transcription regulation and in processing events critical for proper rRNA biogenesis and nucleolar organization during reproduction; contributes to pre-rRNA processing at the 5' external transcribed spacer. Binds RNA. The chain is Protein THALLO from Arabidopsis thaliana (Mouse-ear cress).